The chain runs to 396 residues: GTPase Obg (396 aa).

The Obg domain maps to 1-159 (MKFVDEATIY…RNIRLELKVL (159 aa)). Residues 160–333 (ADVGLLGLPN…LCQDIMTWIE (174 aa)) enclose the OBG-type G domain. GTP contacts are provided by residues 166-173 (GLPNAGKS), 191-195 (FTTLV), 213-216 (DIPG), 283-286 (NKTD), and 314-316 (SAL). Positions 173 and 193 each coordinate Mg(2+). 2 disordered regions span residues 337–356 (EEER…REQM) and 373–396 (LARK…FYAP). A compositionally biased stretch (basic and acidic residues) spans 347–356 (EADRLNREQM). The span at 381 to 396 (SDDDDDDEDVEVFYAP) shows a compositional bias: acidic residues.

Belongs to the TRAFAC class OBG-HflX-like GTPase superfamily. OBG GTPase family. In terms of assembly, monomer. Mg(2+) is required as a cofactor.

It localises to the cytoplasm. Its function is as follows. An essential GTPase which binds GTP, GDP and possibly (p)ppGpp with moderate affinity, with high nucleotide exchange rates and a fairly low GTP hydrolysis rate. Plays a role in control of the cell cycle, stress response, ribosome biogenesis and in those bacteria that undergo differentiation, in morphogenesis control. This is GTPase Obg from Hahella chejuensis (strain KCTC 2396).